The chain runs to 31 residues: leu operon leader peptide (31 aa).

Involved in control of the biosynthesis of leucine. In Buchnera aphidicola subsp. Rhopalosiphum padi, this protein is leu operon leader peptide (leuL).